Reading from the N-terminus, the 286-residue chain is MAELSLKKIYSGKVRDLYEIDDKRMLMVASDRLSAFDVILEDPIPRKGEILTQISNFWFKKLAHIMPNHFTGDTVYDVLPKEEADLVKNRAVVVKRLKPIKIESIVRGYLTGSGLKDYKQTGTICGLQLPQGLVEASKLPEPIFTPSSKEEVGDHDINISYAECERQIGKELAAQVRDAAIALYKEAAAYALTKGIIICDTKFEFGLDENGTLTLMDEVLTPDSSRFWSVDTYREGTNPPSFDKQFVRDWLEQSGWNKQPPAPKVPADVIQKTVDKYQEALDLLTK.

The protein belongs to the SAICAR synthetase family.

The catalysed reaction is 5-amino-1-(5-phospho-D-ribosyl)imidazole-4-carboxylate + L-aspartate + ATP = (2S)-2-[5-amino-1-(5-phospho-beta-D-ribosyl)imidazole-4-carboxamido]succinate + ADP + phosphate + 2 H(+). It participates in purine metabolism; IMP biosynthesis via de novo pathway; 5-amino-1-(5-phospho-D-ribosyl)imidazole-4-carboxamide from 5-amino-1-(5-phospho-D-ribosyl)imidazole-4-carboxylate: step 1/2. This is Phosphoribosylaminoimidazole-succinocarboxamide synthase from Mannheimia succiniciproducens (strain KCTC 0769BP / MBEL55E).